The chain runs to 253 residues: PAXIP1-associated glutamate-rich protein 1 (253 aa).

Disordered regions lie at residues 1–109 (MSLV…MPPP) and 128–253 (QAEI…QRKY). Residues 51-62 (EGGREEAEHEGS) show a composition bias toward basic and acidic residues. The sufficient for interaction with NCOA1 stretch occupies residues 116–160 (YELLAAHGTLELQAEILPRRPPTPEAQSEEERSDEEPEAKEEEEE). Residue Thr-138 is modified to Phosphothreonine. Residues 142-159 (QSEEERSDEEPEAKEEEE) are compositionally biased toward acidic residues. A phosphoserine mark is found at Ser-143 and Ser-148. Positions 161-253 (KPHMPTEFDF…GSLFPRQRKY (93 aa)) are sufficient for interaction with ESR1. Residues 195–223 (QKREARLDKVLSDMKRHKKLEEQILRTGR) are compositionally biased toward basic and acidic residues. Ser-237 is modified (phosphoserine).

Component of the KMT2 family MLL2/MLL3 complex, at least composed of the histone methyltransferases KMT2D and/or KMT2C, the common complex subunits ASH2L, RBBP5, WDR5 and DPY30, and the complex type-specific subunits PAXIP1/PTIP, PAGR1, NCOA6 and KDM6A; PAXIP1 is required for the association with the MLL2/MLL3 complex. Forms a constitutive complex with PAXIP1/PTIP independently of the MLL2/MLL3 complex. Interacts with NCOA1, ESR1, NR3C1, AR.

It is found in the nucleus. Its association with the histone methyltransferase MLL2/MLL3 complex is suggesting a role in epigenetic transcriptional activation. However, in association with PAXIP1/PTIP is proposed to function at least in part independently of the MLL2/MLL3 complex. Proposed to be recruited by PAXIP1 to sites of DNA damage where the PAGR1:PAXIP1 complex is required for cell survival in response to DNA damage independently of the MLL2/MLL3 complex. However, its function in DNA damage has been questioned. During immunoglobulin class switching in activated B-cells is involved in transcription regulation of downstream switch regions at the immunoglobulin heavy-chain (Igh) locus independently of the MLL2/MLL3 complex. Involved in both estrogen receptor-regulated gene transcription and estrogen-stimulated G1/S cell-cycle transition. Acts as a transcriptional cofactor for nuclear hormone receptors. Inhibits the induction properties of several steroid receptors such as NR3C1, AR and PPARG; the mechanism of inhibition appears to be gene-dependent. This Bos taurus (Bovine) protein is PAXIP1-associated glutamate-rich protein 1 (PAGR1).